The primary structure comprises 565 residues: Urocanate hydratase (565 aa).

Residues 61-62, Q139, 185-187, E205, R210, 251-252, 272-276, 282-283, and Y331 contribute to the NAD(+) site; these read GG, GMG, NA, QTSAH, and YL. The active site involves C419. A disordered region spans residues 453–472; that stretch reads LDSGSVASPNRETESMRDGS. The span at 463–472 shows a compositional bias: basic and acidic residues; the sequence is RETESMRDGS. G501 lines the NAD(+) pocket.

Belongs to the urocanase family. NAD(+) is required as a cofactor.

The protein localises to the cytoplasm. The enzyme catalyses 4-imidazolone-5-propanoate = trans-urocanate + H2O. Its pathway is amino-acid degradation; L-histidine degradation into L-glutamate; N-formimidoyl-L-glutamate from L-histidine: step 2/3. Functionally, catalyzes the conversion of urocanate to 4-imidazolone-5-propionate. The polypeptide is Urocanate hydratase (Pseudomonas syringae pv. syringae (strain B728a)).